The sequence spans 146 residues: Snaclec jerdonibitin subunit beta (146 aa).

The N-terminal stretch at 1–23 (MGRFIFVSFGLLVVFLSLSGTGA) is a signal peptide. 3 disulfide bridges follow: Cys-25–Cys-36, Cys-53–Cys-142, and Cys-119–Cys-134. The C-type lectin domain occupies 32–143 (YEGHCYRVFQ…CSKTYPFVCK (112 aa)).

Belongs to the snaclec family. As to quaternary structure, heterodimer of subunits alpha and beta; disulfide-linked. As to expression, expressed by the venom gland.

It is found in the secreted. In terms of biological role, snaclec that dose-dependently inhibits platelet aggregation induced by ristocetin or low-dose thrombin, but not by high-dose thrombin. Binds to GPIbalpha (GP1BA). In vivo, also dose-dependently induces thrombocytopenia of mice and platelet counts remains at very low level even after 18 hours intravenous injection. This Protobothrops jerdonii (Jerdon's pitviper) protein is Snaclec jerdonibitin subunit beta.